The chain runs to 105 residues: Replication initiation control protein YabA (105 aa).

Residues histidine 79, cysteine 81, cysteine 95, and cysteine 98 each contribute to the Zn(2+) site.

This sequence belongs to the YabA family. Homotetramer. Interacts with both DnaA and DnaN, acting as a bridge between these two proteins. Zn(2+) is required as a cofactor.

Its subcellular location is the cytoplasm. The protein localises to the nucleoid. In terms of biological role, involved in control of chromosome replication initiation. Inhibits the cooperative binding of DnaA to the oriC region, thus negatively regulating initiation of chromosome replication. Inhibits the ability of DnaA-ATP to form a helix on DNA; does not disassemble preformed DnaA-DNA helices. Decreases the residence time of DnaA on the chromosome at its binding sites (oriC, replication forks and promoter-binding sites). Tethers DnaA to the replication machinery via the DNA polymerase beta sliding clamp subunit (dnaN). Associates with oriC and other DnaA targets on the chromosome in a DnaA-dependent manner. This is Replication initiation control protein YabA from Streptococcus pneumoniae serotype 2 (strain D39 / NCTC 7466).